Consider the following 83-residue polypeptide: Hainantoxin-III 6 (83 aa).

Residues 1–21 form the signal peptide; sequence MKASMFLALAGLVLLFVVGYA. A propeptide spanning residues 22 to 48 is cleaved from the precursor; the sequence is SESEEKESPRELLSKIFAVDDFKGEER. 3 disulfides stabilise this stretch: Cys50-Cys65, Cys57-Cys70, and Cys64-Cys77. Residue Leu81 is modified to Leucine amide.

The protein belongs to the neurotoxin 10 (Hwtx-1) family. 15 (Hntx-3) subfamily. Monomer. Expressed by the venom gland.

The protein resides in the secreted. In terms of biological role, selective antagonist of neuronal tetrodotoxin (TTX)-sensitive voltage-gated sodium channels (IC(50)=1270 nM on Nav1.1/SCN1A, 270 nM on Nav1.2/SCN2A, 491 nM on Nav1.3/SCN3A and 232 nM on Nav1.7/SCN9A). This toxin suppress Nav1.7 current amplitude without significantly altering the activation, inactivation, and repriming kinetics. Short extreme depolarizations partially activate the toxin-bound channel, indicating voltage-dependent inhibition of this toxin. This toxin increases the deactivation of the Nav1.7 current after extreme depolarizations. The toxin-Nav1.7 complex is gradually dissociated upon prolonged strong depolarizations in a voltage-dependent manner, and the unbound toxin rebinds to Nav1.7 after a long repolarization. Moreover, analysis of chimeric channels showed that the DIIS3-S4 linker is critical for toxin binding to Nav1.7. These data are consistent with this toxin interacting with Nav1.7 site 4 and trapping the domain II voltage sensor in the closed state. This chain is Hainantoxin-III 6, found in Cyriopagopus hainanus (Chinese bird spider).